The following is a 329-amino-acid chain: Cysteine synthase (329 aa).

N6-(pyridoxal phosphate)lysine is present on K48. Pyridoxal 5'-phosphate contacts are provided by residues N78, 183 to 187 (GTGGT), and S278.

It belongs to the cysteine synthase/cystathionine beta-synthase family. In terms of assembly, homodimer. Pyridoxal 5'-phosphate serves as cofactor.

It catalyses the reaction O-acetyl-L-serine + hydrogen sulfide = L-cysteine + acetate. Its pathway is amino-acid biosynthesis; L-cysteine biosynthesis; L-cysteine from L-serine: step 2/2. Catalyzes the conversion of O-acetylserine (OAS) to cysteine through the elimination of acetate and addition of hydrogen sulfide. The polypeptide is Cysteine synthase (srpG) (Synechococcus elongatus (strain ATCC 33912 / PCC 7942 / FACHB-805) (Anacystis nidulans R2)).